The chain runs to 380 residues: Glucose-1-phosphate adenylyltransferase (380 aa).

Alpha-D-glucose 1-phosphate contacts are provided by residues glycine 164, 179–180, and serine 190; that span reads EK.

It belongs to the bacterial/plant glucose-1-phosphate adenylyltransferase family. In terms of assembly, homotetramer.

It carries out the reaction alpha-D-glucose 1-phosphate + ATP + H(+) = ADP-alpha-D-glucose + diphosphate. Its pathway is glycan biosynthesis; glycogen biosynthesis. In terms of biological role, involved in the biosynthesis of ADP-glucose, a building block required for the elongation reactions to produce glycogen. Catalyzes the reaction between ATP and alpha-D-glucose 1-phosphate (G1P) to produce pyrophosphate and ADP-Glc. This is Glucose-1-phosphate adenylyltransferase from Lactococcus lactis subsp. cremoris (strain MG1363).